Here is a 282-residue protein sequence, read N- to C-terminus: Nucleotide-binding protein PXO_02223 (282 aa).

Residue 5-12 (GLSGSGKS) participates in ATP binding. 57 to 60 (DVRS) is a GTP binding site.

Belongs to the RapZ-like family.

Its function is as follows. Displays ATPase and GTPase activities. The chain is Nucleotide-binding protein PXO_02223 from Xanthomonas oryzae pv. oryzae (strain PXO99A).